The primary structure comprises 450 residues: MFNNLTERLSQSLRKIINKGRLTEENIKDTIREVRKALLEADVTLSVIKKFIQNVSKKAIGHEINKSLTPGQEFIKIVKNELILSMGEKNHDLNLSIQPPAIILVVGLQGVGKTTTLVKLAKWIKEKYKKKILTVSTDIYRAAAIKQLQILSDQVKIDFYLSDTTQTPINITKEAIEHAKLKLYDLLLIDTAGRLHINTEMMNEINTIQNISKPIETLLIVDSMMGQDAINIAKKFSASLSISGIVITKTDSDARSGVALSIRHITGKPIKFIGTGEKLHQLEPFHPERIADRILGMNQVISLIKDIEEKVNQSQVKNLTKKFRKGDDFNLNDFLIQLKEMKNMGNLNYFIEKFSKNKILSNNPLLGENKNTLNRIEAIIYSMTHKERMHPIIIKGSRKRRIALGSGTKIQDVNKLLKNFDNIKKIMKKIKKGGIGKMIRNISNILPKNF.

Residues 107-114 (GLQGVGKT), 190-194 (DTAGR), and 248-251 (TKTD) each bind GTP.

It belongs to the GTP-binding SRP family. SRP54 subfamily. As to quaternary structure, part of the signal recognition particle protein translocation system, which is composed of SRP and FtsY. SRP is a ribonucleoprotein composed of Ffh and a 4.5S RNA molecule.

It is found in the cytoplasm. The catalysed reaction is GTP + H2O = GDP + phosphate + H(+). Functionally, involved in targeting and insertion of nascent membrane proteins into the cytoplasmic membrane. Binds to the hydrophobic signal sequence of the ribosome-nascent chain (RNC) as it emerges from the ribosomes. The SRP-RNC complex is then targeted to the cytoplasmic membrane where it interacts with the SRP receptor FtsY. Interaction with FtsY leads to the transfer of the RNC complex to the Sec translocase for insertion into the membrane, the hydrolysis of GTP by both Ffh and FtsY, and the dissociation of the SRP-FtsY complex into the individual components. The polypeptide is Signal recognition particle protein (Buchnera aphidicola subsp. Schizaphis graminum (strain Sg)).